A 147-amino-acid chain; its full sequence is UPF0460 protein in nifX-nifW intergenic region (147 aa).

It belongs to the UPF0460 family.

The sequence is that of UPF0460 protein in nifX-nifW intergenic region from Frankia alni.